The primary structure comprises 1171 residues: APC-related protein 1 (1171 aa).

The interval 1-54 (MSSSSSDENETTIHSSSNPGSSGIYSQLKAGSSKRPSVRHDVSDAEDDEEPYEG) is disordered. The interval 1-481 (MSSSSSDENE…LSLRATRASP (481 aa)) is required for interaction with bar-1 and hmp-2. Low complexity predominate over residues 15–26 (SSSNPGSSGIYS). One copy of the ARM repeat lies at 312 to 356 (NCLKVLANILSPDARFTTLVDSASGILKYVSQYLATNSSHLELRS). Disordered regions lie at residues 587-617 (PVDD…NPGS), 662-699 (HPED…GTTV), 720-741 (RKTS…LEVE), 767-822 (EEMP…EMTT), 837-936 (PRSR…TMRI), and 995-1030 (SSGS…SSLP). A required for interaction with pry-1 region spans residues 591–1171 (DLDIPTSTVM…NPKQMLVTIV (581 aa)). Polar residues-rich tracts occupy residues 595–617 (PTST…NPGS) and 666–697 (NQMT…SDGT). Positions 788-799 (FSPSQKTTSSPA) are enriched in polar residues. Residues 857 to 874 (EPDRSSHSKNEEADRRDA) are compositionally biased toward basic and acidic residues. Polar residues-rich tracts occupy residues 890–913 (RGSS…SSED) and 1002–1028 (LQKA…SVSS).

Belongs to the adenomatous polyposis coli (APC) family. As to quaternary structure, interacts (via N-terminus) with bar-1 and hmp-2; the interaction with hmp-2 is relatively weak. Interacts (via C-terminus) with pry-1 (via N-terminus). Probably associates with bar-1, gsk-3, pry-1 in a complex.

It localises to the cell junction. Its subcellular location is the adherens junction. The protein localises to the cytoplasm. The protein resides in the nucleus. In terms of biological role, has a role in endoderm cell specification and pharyngeal development. Required for the migration of epithelial cells, organization of the anterior seam cells and ceh-13 expression during embryo morphogenesis. Prevents hyperactivation of the Wnt signaling pathway during endoderm development, probably by preventing hmp-2 nuclear translocation. During larval development, apr-1 is required for expression of lin-39 in P3-8.p. Shown to negatively regulate Wnt signaling in vulval precursor cells. Has a role in cell division by establishing the polarity of the mother cell which forms the asymmetries of the daughter nuclei. Thought to regulate export of wrm-1 from the nucleus possibly as part of a complex involving pry-1. In Caenorhabditis briggsae, this protein is APC-related protein 1.